The primary structure comprises 520 residues: Cytochrome P450 72A397 (520 aa).

The chain crosses the membrane as a helical span at residues 14 to 34 (AVAVAVVVVGWAWKVLNWVWV). Cysteine 468 provides a ligand contact to heme.

The protein belongs to the cytochrome P450 family. Requires heme as cofactor.

The protein localises to the membrane. The enzyme catalyses oleanolate + reduced [NADPH--hemoprotein reductase] + O2 = hederagenin + oxidized [NADPH--hemoprotein reductase] + H2O + H(+). Catalyzes the oxidation of oleanolate at the C-23 position to form hederagenin. The chain is Cytochrome P450 72A397 from Kalopanax septemlobus (Castor aralia).